Reading from the N-terminus, the 436-residue chain is Sarcosine reductase complex component B subunit beta (436 aa).

U350 is an active-site residue. U350 is a non-standard amino acid (selenocysteine).

This sequence belongs to the GrdB/GrdF/GrdH family. In terms of assembly, heterotetramer of two alpha and two beta subunits. Component of the sarcosine reductase complex, together with components A and C. PB is substrate specific.

The enzyme catalyses acetyl phosphate + methylamine + [thioredoxin]-disulfide + H2O = sarcosine + [thioredoxin]-dithiol + phosphate + H(+). In the first step of sarcosine reductase, the substrate is bound to component PB via a Schiff base intermediate. Then the PB-activated substrate is nucleophilically attacked by the selenol anion of component PA to transform it to a carboxymethylated selenoether and the respective amine. By action of component PC, acetyl phosphate is formed, leaving component PA in its oxidized state. Finally component PA becomes reduced by the thioredoxin system to start a new catalytic cycle of reductive deamination. This is Sarcosine reductase complex component B subunit beta (grdF) from Peptoclostridium acidaminophilum (Eubacterium acidaminophilum).